The sequence spans 673 residues: Synaptotagmin-like protein 4 (673 aa).

Positions 4–122 (ILDLSFLSEM…KATGDWFYDQ (119 aa)) constitute a RabBD domain. Residues 63-105 (CARCQEGLGRLIPKSSTCVGCNHLVCRECRVLESNGSWRCKVC) form an FYVE-type zinc finger. A disordered region spans residues 184–253 (FEVPKTRSGK…PGNQNAVCGD (70 aa)). Phosphoserine is present on residues Ser-202, Ser-205, Ser-218, Ser-222, and Ser-275. The C2 1 domain maps to 358 to 480 (VTGKIAFSLK…KLDKKLDHCL (123 aa)). Ser-490 is modified (phosphoserine). Residues 509-635 (PASKLPVGGD…ISNGEVVDWM (127 aa)) enclose the C2 2 domain.

In terms of assembly, part of a ternary complex containing STX1A and RAB27A. Can bind both dominant negative and dominant active mutants of RAB27A. Binds STXBP1, RAB3A, RAB8A and RAB27B. Interacts with MYO5A. Detected in the pancreatic islet, in particular in insulin-positive beta cells, and in pituitary.

It is found in the membrane. The protein localises to the cytoplasmic vesicle. Its subcellular location is the secretory vesicle membrane. Functionally, modulates exocytosis of dense-core granules and secretion of hormones in the pancreas and the pituitary. Interacts with vesicles containing negatively charged phospholipids in a Ca(2+)-independent manner. The chain is Synaptotagmin-like protein 4 (Sytl4) from Mus musculus (Mouse).